A 412-amino-acid polypeptide reads, in one-letter code: Transcription factor IIIA (412 aa).

A C2H2-type 1; degenerate zinc finger spans residues 20–43 (YLCQYCGISRSKNYLITKHIQSHH). 3 consecutive C2H2-type zinc fingers follow at residues 66 to 88 (HTCQ…MQSH), 94 to 118 (FTCY…LLTH), and 123 to 148 (FKCP…KKYH). Residues 144–207 (VKKYHSNDNR…NGNGDSQPAE (64 aa)) are disordered. Over residues 148-188 (HSNDNRDKDNTGLGDGDKDNTCKGDDDKEKSGSGGCEKENE) the composition is skewed to basic and acidic residues. Lys185 is covalently cross-linked (Glycyl lysine isopeptide (Lys-Gly) (interchain with G-Cter in ubiquitin)). The C2H2-type 5 zinc-finger motif lies at 215 to 239 (VVCKEIGCGKAFKYPSQLQKHQDSH). A C2H2-type 6; degenerate zinc finger spans residues 247–272 (AFCSEPGCMKYFTNEECLKSHIRSCH). The C2H2-type 7; degenerate zinc finger occupies 275–296 (INCEICGSKHLKKNIKRHLRTH). The segment at 305–330 (IKCEVEGCSSTFSKASNLQKHMKAVH) adopts a C2H2-type 8 zinc-finger fold. The segment at 336–362 (FVCGFPGCGMRFAYKHVRNKHENSGYH) adopts a C2H2-type 9; degenerate zinc-finger fold. The Nuclear localization signal motif lies at 384-391 (LKRKQVTA).

Protein product TFIIIA (44 kDa) is proteolytically cleaved into TFIIIA-C (34 kDa). In terms of tissue distribution, expressed in seedlings, flowers, siliques and seeds.

The protein resides in the nucleus. It is found in the nucleolus. In terms of biological role, essential protein. Isoform 1 is a transcription activator the binds both 5S rDNA and 5S rRNA and stimulates the transcription of 5S rRNA gene. Isoform 1 regulates 5S rRNA levels during development. This Arabidopsis thaliana (Mouse-ear cress) protein is Transcription factor IIIA.